Reading from the N-terminus, the 436-residue chain is GTPase Der (436 aa).

EngA-type G domains are found at residues 4–167 and 175–351; these read PTIA…PNEE and IKFS…QSQN. GTP is bound by residues 10–17, 57–61, 119–122, 181–188, 229–233, and 294–297; these read GRPNVGKS, DTGGI, NKVD, DTAGM, and NKWD. In terms of domain architecture, KH-like spans 352-436; it reads TRIPSAVLND…PIHLIARKRK (85 aa).

This sequence belongs to the TRAFAC class TrmE-Era-EngA-EngB-Septin-like GTPase superfamily. EngA (Der) GTPase family. Associates with the 50S ribosomal subunit.

Its function is as follows. GTPase that plays an essential role in the late steps of ribosome biogenesis. This chain is GTPase Der, found in Streptococcus sanguinis (strain SK36).